The chain runs to 206 residues: LexA repressor (206 aa).

The H-T-H motif DNA-binding region spans 28 to 48 (VREICAAVGLSSTSTVHGHLT). Catalysis depends on for autocatalytic cleavage activity residues Ser-127 and Lys-165.

This sequence belongs to the peptidase S24 family. Homodimer.

It carries out the reaction Hydrolysis of Ala-|-Gly bond in repressor LexA.. In terms of biological role, represses a number of genes involved in the response to DNA damage (SOS response), including recA and lexA. In the presence of single-stranded DNA, RecA interacts with LexA causing an autocatalytic cleavage which disrupts the DNA-binding part of LexA, leading to derepression of the SOS regulon and eventually DNA repair. The polypeptide is LexA repressor (Lactobacillus delbrueckii subsp. bulgaricus (strain ATCC 11842 / DSM 20081 / BCRC 10696 / JCM 1002 / NBRC 13953 / NCIMB 11778 / NCTC 12712 / WDCM 00102 / Lb 14)).